Here is a 215-residue protein sequence, read N- to C-terminus: Proteasome subunit beta type-1 (215 aa).

Methionine 1 carries the N-acetylmethionine modification. A propeptide spans 1–19 (MNGIQVDINRLKKGEVSLG) (removed in mature form). Threonine 20 functions as the Nucleophile in the catalytic mechanism.

This sequence belongs to the peptidase T1B family. As to quaternary structure, the 26S proteasome consists of a 20S proteasome core and two 19S regulatory subunits. The 20S proteasome core is composed of 28 subunits that are arranged in four stacked rings, resulting in a barrel-shaped structure. The two end rings are each formed by seven alpha subunits, and the two central rings are each formed by seven beta subunits. The catalytic chamber with the active sites is on the inside of the barrel.

The protein localises to the cytoplasm. It localises to the nucleus. The enzyme catalyses Cleavage of peptide bonds with very broad specificity.. In terms of biological role, the proteasome degrades poly-ubiquitinated proteins in the cytoplasm and in the nucleus. It is essential for the regulated turnover of proteins and for the removal of misfolded proteins. The proteasome is a multicatalytic proteinase complex that is characterized by its ability to cleave peptides with Arg, Phe, Tyr, Leu, and Glu adjacent to the leaving group at neutral or slightly basic pH. It has an ATP-dependent proteolytic activity. PRE3 and PRE4 are necessary for the peptidyl-glutamyl-peptide-hydrolyzing activity. Functionally, this subunit is necessary for the peptidylglutamyl-peptide hydrolyzing activity. The protein is Proteasome subunit beta type-1 (PRE3) of Saccharomyces cerevisiae (strain ATCC 204508 / S288c) (Baker's yeast).